The primary structure comprises 308 residues: 1D-myo-inositol 2-acetamido-2-deoxy-alpha-D-glucopyranoside deacetylase (308 aa).

Positions 18, 21, and 153 each coordinate Zn(2+).

The protein belongs to the MshB deacetylase family. Zn(2+) serves as cofactor.

It catalyses the reaction 1D-myo-inositol 2-acetamido-2-deoxy-alpha-D-glucopyranoside + H2O = 1D-myo-inositol 2-amino-2-deoxy-alpha-D-glucopyranoside + acetate. Functionally, catalyzes the deacetylation of 1D-myo-inositol 2-acetamido-2-deoxy-alpha-D-glucopyranoside (GlcNAc-Ins) in the mycothiol biosynthesis pathway. This is 1D-myo-inositol 2-acetamido-2-deoxy-alpha-D-glucopyranoside deacetylase from Salinispora arenicola (strain CNS-205).